Here is a 548-residue protein sequence, read N- to C-terminus: Glucose-6-phosphate isomerase (548 aa).

E355 serves as the catalytic Proton donor. Residues H386 and K514 contribute to the active site.

Belongs to the GPI family.

Its subcellular location is the cytoplasm. It carries out the reaction alpha-D-glucose 6-phosphate = beta-D-fructose 6-phosphate. Its pathway is carbohydrate biosynthesis; gluconeogenesis. It functions in the pathway carbohydrate degradation; glycolysis; D-glyceraldehyde 3-phosphate and glycerone phosphate from D-glucose: step 2/4. Catalyzes the reversible isomerization of glucose-6-phosphate to fructose-6-phosphate. The sequence is that of Glucose-6-phosphate isomerase from Proteus mirabilis (strain HI4320).